The primary structure comprises 658 residues: Endoplasmic reticulum mannosyl-oligosaccharide 1,2-alpha-mannosidase (658 aa).

Over 1–50 (MYPPPAPPPAPHRDFISVTLSLGESYDNSKSRRRRSCWRKWKQLSRLQRN) the chain is Cytoplasmic. Residues 51–71 (VILFVLGFLILCGFLYSLHTA) traverse the membrane as a helical; Signal-anchor for type II membrane protein segment. The Lumenal segment spans residues 72–658 (DQWKALSGRP…AHPLPIWAPA (587 aa)). At serine 102 the chain carries Phosphoserine. A disordered region spans residues 123–142 (GPPHLQIRPPNTVSKDGMQD). The active-site Proton donor is glutamate 289. Aspartate 422 is a catalytic residue. Cysteine 486 and cysteine 515 are joined by a disulfide. Catalysis depends on glutamate 529, which acts as the Proton donor. The active site involves glutamate 558. Threonine 647 is a Ca(2+) binding site.

Belongs to the glycosyl hydrolase 47 family. Ca(2+) serves as cofactor.

The protein localises to the endoplasmic reticulum membrane. It catalyses the reaction N(4)-(alpha-D-Man-(1-&gt;2)-alpha-D-Man-(1-&gt;2)-alpha-D-Man-(1-&gt;3)-[alpha-D-Man-(1-&gt;2)-alpha-D-Man-(1-&gt;3)-[alpha-D-Man-(1-&gt;2)-alpha-D-Man-(1-&gt;6)]-alpha-D-Man-(1-&gt;6)]-beta-D-Man-(1-&gt;4)-beta-D-GlcNAc-(1-&gt;4)-beta-D-GlcNAc)-L-asparaginyl-[protein] (N-glucan mannose isomer 9A1,2,3B1,2,3) + 4 H2O = N(4)-(alpha-D-Man-(1-&gt;3)-[alpha-D-Man-(1-&gt;3)-[alpha-D-Man-(1-&gt;6)]-alpha-D-Man-(1-&gt;6)]-beta-D-Man-(1-&gt;4)-beta-D-GlcNAc-(1-&gt;4)-beta-D-GlcNAc)-L-asparaginyl-[protein] (N-glucan mannose isomer 5A1,2) + 4 beta-D-mannose. The catalysed reaction is N(4)-(alpha-D-Man-(1-&gt;2)-alpha-D-Man-(1-&gt;2)-alpha-D-Man-(1-&gt;3)-[alpha-D-Man-(1-&gt;3)-[alpha-D-Man-(1-&gt;2)-alpha-D-Man-(1-&gt;6)]-alpha-D-Man-(1-&gt;6)]-beta-D-Man-(1-&gt;4)-beta-D-GlcNAc-(1-&gt;4)-beta-D-GlcNAc)-L-asparaginyl-[protein] (N-glucan mannose isomer 8A1,2,3B1,3) + 3 H2O = N(4)-(alpha-D-Man-(1-&gt;3)-[alpha-D-Man-(1-&gt;3)-[alpha-D-Man-(1-&gt;6)]-alpha-D-Man-(1-&gt;6)]-beta-D-Man-(1-&gt;4)-beta-D-GlcNAc-(1-&gt;4)-beta-D-GlcNAc)-L-asparaginyl-[protein] (N-glucan mannose isomer 5A1,2) + 3 beta-D-mannose. Its pathway is protein modification; protein glycosylation. Functionally, involved in glycoprotein quality control targeting of misfolded glycoproteins for degradation. It primarily trims a single alpha-1,2-linked mannose residue from Man(9)GlcNAc(2) to produce Man(8)GlcNAc(2), but at high enzyme concentrations, as found in the ER quality control compartment (ERQC), it further trims the carbohydrates to Man(5-6)GlcNAc(2). The polypeptide is Endoplasmic reticulum mannosyl-oligosaccharide 1,2-alpha-mannosidase (Man1b1) (Mus musculus (Mouse)).